A 367-amino-acid polypeptide reads, in one-letter code: Ganglioside-induced differentiation-associated protein 1-like 1 (367 aa).

In terms of domain architecture, GST N-terminal spans 45–126 (ESLVLYHWTQ…YVERTFTGEH (82 aa)). Residues 174–341 (PKYATAEIRR…RLVKRKPPSF (168 aa)) enclose the GST C-terminal domain.

Belongs to the GST superfamily.

The chain is Ganglioside-induced differentiation-associated protein 1-like 1 (GDAP1L1) from Homo sapiens (Human).